The primary structure comprises 217 residues: Fucoxanthin-chlorophyll a-c binding protein A, chloroplastic (217 aa).

A chloroplast-targeting transit peptide spans 1–39; sequence MKSAVMAVACAAAPGLRRPSAFNGAALTTSAKSSSAMKM. Transmembrane regions (helical) follow at residues 81–101, 122–142, and 183–203; these read IAMLAIAGHLTQQNARLPGML, IPPAGLAQIFAFIGFLELAVM, and GRAAQMGILALMVHEELNNKP.

The protein belongs to the fucoxanthin chlorophyll protein family. As to quaternary structure, the LHC complex of chromophytic algae is composed of fucoxanthin, chlorophyll A and C bound non-covalently by fucoxanthin chlorophyll proteins (FCPs). The ratio of pigments in this LHC is; fucoxanthin: chlorophyll C: chlorophyll A; (0.6-1): (0.1-0.3): (1).

The protein resides in the plastid. Its subcellular location is the chloroplast thylakoid membrane. The light-harvesting complex (LHC) functions as a light receptor, it captures and delivers excitation energy to photosystems with which it is closely associated. Energy is transferred from the carotenoid and chlorophyll C (or B) to chlorophyll A and the photosynthetic reaction centers where it is used to synthesize ATP and reducing power. In Macrocystis pyrifera (Giant kelp), this protein is Fucoxanthin-chlorophyll a-c binding protein A, chloroplastic (FCPA).